The following is a 92-amino-acid chain: uncharacterized protein (92 aa).

This is an uncharacterized protein from Treponema pallidum (strain Nichols).